A 334-amino-acid chain; its full sequence is NAD-dependent protein deacylase sirtuin-6 (334 aa).

Ser2 bears the N-acetylserine mark. Ser10 bears the Phosphoserine mark. The 246-residue stretch at 27–272 (PEELERKVWE…CRLMKHLGLE (246 aa)) folds into the Deacetylase sirtuin-type domain. Lys33 bears the N6-acetyllysine mark. Positions 53, 57, 64, 65, 71, 113, and 133 each coordinate NAD(+). The active-site Proton acceptor is His133. Positions 141, 144, and 166 each coordinate Zn(2+). Lys170 is covalently cross-linked (Glycyl lysine isopeptide (Lys-Gly) (interchain with G-Cter in ubiquitin)). Position 177 (Cys177) interacts with Zn(2+). Gly214, Ser216, Asn240, Gln242, and Val258 together coordinate NAD(+). Positions 312–334 (KSKPNSPILHRPPKRVKTEAAPS) are disordered.

This sequence belongs to the sirtuin family. Class IV subfamily. In terms of assembly, homodimer; binds to nucleosomes and DNA ends as a homodimer. Interacts with RELA; interferes with RELA binding to target DNA. Interacts with SMARCA5; promoting recruitment of SMARCA5/SNF2H to double-strand breaks (DSBs) sites. Interacts with the mTORC2 complex; preventing the ability of SIRT6 to deacetylate FOXO1. Interacts with the CLOCK-BMAL1 complex; recruited by the CLOCK-BMAL1 complex to regulate expression of clock-controlled genes. Interacts with CSNK2A2; preventing CSNK2A2 localization to the nucleus. It depends on Zn(2+) as a cofactor. Post-translationally, acetylated at Lys-33. Deacetylation at Lys-33 by SIRT1 promotes homomultimerization and binding to double-strand breaks (DSBs) sites. Phosphorylation at Ser-10 by MAPK8/JNK1 in response to oxidative stress stimulates the mono-ADP-ribosyltransferase activity on PARP1, leading to PARP1 recruitment to double-strand breaks (DSBs). In terms of processing, monoubiquitinated at Lys-170 by STUB1/CHIP, preventing its degradation by the proteasome. Post-translationally, sumoylated, leading to specifically decrease ability to deacetylate histone H3 at 'Lys-56' (H3K56ac). As to expression, highest levels are found in muscle, thymus, spleen, brain and heart (at protein level).

The protein resides in the nucleus. It is found in the chromosome. The protein localises to the telomere. Its subcellular location is the endoplasmic reticulum. It catalyses the reaction N(6)-acetyl-L-lysyl-[protein] + NAD(+) + H2O = 2''-O-acetyl-ADP-D-ribose + nicotinamide + L-lysyl-[protein]. The catalysed reaction is N(6)-tetradecanoyl-L-lysyl-[protein] + NAD(+) + H2O = 2''-O-tetradecanoyl-ADP-D-ribose + nicotinamide + L-lysyl-[protein]. The enzyme catalyses N(6)-hexadecanoyl-L-lysyl-[protein] + NAD(+) + H2O = 2''-O-hexadecanoyl-ADP-D-ribose + nicotinamide + L-lysyl-[protein]. It carries out the reaction L-lysyl-[protein] + NAD(+) = N(6)-(ADP-D-ribosyl)-L-lysyl-[protein] + nicotinamide + H(+). It catalyses the reaction L-arginyl-[protein] + NAD(+) = N(omega)-(ADP-D-ribosyl)-L-arginyl-[protein] + nicotinamide + H(+). Its activity is regulated as follows. Compared to the defatty-acylase activity, the protein deacetylase activity is weak in vitro, and requires activation. The histone deacetylase activity is strongly activated upon binding to nucleosomes and chromatin in vivo. Two molecules of SIRT6 associate with the acidic patch of one nucleosome, while the C-terminal disordered region of SIRT6 associates with nucleosomal DNA, leading to efficient histone deacetylation. The protein-lysine deacetylase activity is also activated by long-chain free fatty-acids. In terms of biological role, NAD-dependent protein deacetylase, deacylase and mono-ADP-ribosyltransferase that plays an essential role in DNA damage repair, telomere maintenance, metabolic homeostasis, inflammation, tumorigenesis and aging. Displays protein-lysine deacetylase or defatty-acylase (demyristoylase and depalmitoylase) activity, depending on the context. Acts as a key histone deacetylase by catalyzing deacetylation of histone H3 at 'Lys-9', 'Lys-18' and 'Lys-56' (H3K9ac, H3K18ac and H3K56ac, respectively), suppressing target gene expression of several transcription factors, including NF-kappa-B. Acts as an inhibitor of transcription elongation by mediating deacetylation of H3K9ac and H3K56ac, preventing release of NELFE from chromatin and causing transcriptional pausing. Involved in DNA repair by promoting double-strand break (DSB) repair: acts as a DSB sensor by recognizing and binding DSB sites, leading to (1) recruitment of DNA repair proteins, such as SMARCA5/SNF2H, and (2) deacetylation of histone H3K9ac and H3K56ac. SIRT6 participation to DSB repair is probably involved in extension of life span. Also promotes DNA repair by deacetylating non-histone proteins, such as DDB2 and p53/TP53. Specifically deacetylates H3K18ac at pericentric heterochromatin, thereby maintaining pericentric heterochromatin silencing at centromeres and protecting against genomic instability and cellular senescence. Involved in telomere maintenance by catalyzing deacetylation of histone H3 in telomeric chromatin, regulating telomere position effect and telomere movement in response to DNA damage. Required for embryonic stem cell differentiation by mediating histone deacetylation of H3K9ac. Plays a major role in metabolism by regulating processes such as glycolysis, gluconeogenesis, insulin secretion and lipid metabolism. Inhibits glycolysis via histone deacetylase activity and by acting as a corepressor of the transcription factor HIF1A, thereby controlling the expression of multiple glycolytic genes. Has tumor suppressor activity by repressing glycolysis, thereby inhibiting the Warburg effect. Also regulates glycolysis and tumorigenesis by mediating deacetylation and nuclear export of non-histone proteins, such as isoform M2 of PKM (PKM2). Acts as a negative regulator of gluconeogenesis by mediating deacetylation of non-histone proteins, such as FOXO1 and KAT2A/GCN5. Promotes beta-oxidation of fatty acids during fasting by catalyzing deacetylation of NCOA2, inducing coactivation of PPARA. Acts as a regulator of lipid catabolism in brown adipocytes, both by catalyzing deacetylation of histones and non-histone proteins, such as FOXO1. Also acts as a regulator of circadian rhythms, both by regulating expression of clock-controlled genes involved in lipid and carbohydrate metabolism, and by catalyzing deacetylation of PER2. The defatty-acylase activity is specifically involved in regulation of protein secretion. Has high activity toward long-chain fatty acyl groups and mediates protein-lysine demyristoylation and depalmitoylation of target proteins, such as RRAS2 and TNF, thereby regulating their secretion. Also acts as a mono-ADP-ribosyltransferase by mediating mono-ADP-ribosylation of PARP1, TRIM28/KAP1 or SMARCC2/BAF170. Mono-ADP-ribosyltransferase activity is involved in DNA repair, cellular senescence, repression of LINE-1 retrotransposon elements and regulation of transcription. The chain is NAD-dependent protein deacylase sirtuin-6 from Mus musculus (Mouse).